A 339-amino-acid chain; its full sequence is Anthranilate phosphoribosyltransferase (339 aa).

5-phospho-alpha-D-ribose 1-diphosphate-binding positions include G86, 89-90 (GD), T94, 96-99 (NIST), 114-122 (KHGNRGVSS), and S126. Anthranilate is bound at residue G86. S98 serves as a coordination point for Mg(2+). N117 contributes to the anthranilate binding site. Residue R172 coordinates anthranilate. Positions 230 and 231 each coordinate Mg(2+).

The protein belongs to the anthranilate phosphoribosyltransferase family. Homodimer. Mg(2+) is required as a cofactor.

The enzyme catalyses N-(5-phospho-beta-D-ribosyl)anthranilate + diphosphate = 5-phospho-alpha-D-ribose 1-diphosphate + anthranilate. The protein operates within amino-acid biosynthesis; L-tryptophan biosynthesis; L-tryptophan from chorismate: step 2/5. Its function is as follows. Catalyzes the transfer of the phosphoribosyl group of 5-phosphorylribose-1-pyrophosphate (PRPP) to anthranilate to yield N-(5'-phosphoribosyl)-anthranilate (PRA). This chain is Anthranilate phosphoribosyltransferase, found in Photobacterium profundum (strain SS9).